The chain runs to 149 residues: Protein RhiC (149 aa).

The signal sequence occupies residues 1 to 23 (MTATLRAFGWLAAFALTVTFAQG).

Its subcellular location is the periplasm. Its function is as follows. May be involved in plant-microbe interaction. The sequence is that of Protein RhiC (rhiC) from Rhizobium leguminosarum bv. viciae.